A 130-amino-acid chain; its full sequence is Putative transposase for insertion sequence element IS6501 (130 aa).

This sequence belongs to the transposase 11 family.

In terms of biological role, involved in the transposition of the insertion sequence. This Brucella ovis (strain ATCC 25840 / 63/290 / NCTC 10512) protein is Putative transposase for insertion sequence element IS6501.